A 118-amino-acid polypeptide reads, in one-letter code: Large ribosomal subunit protein bL20 (118 aa).

Belongs to the bacterial ribosomal protein bL20 family.

Binds directly to 23S ribosomal RNA and is necessary for the in vitro assembly process of the 50S ribosomal subunit. It is not involved in the protein synthesizing functions of that subunit. This is Large ribosomal subunit protein bL20 from Psychrobacter arcticus (strain DSM 17307 / VKM B-2377 / 273-4).